Reading from the N-terminus, the 1001-residue chain is uncharacterized protein (1001 aa).

Residues 939–948 show a composition bias toward basic and acidic residues; that stretch reads KVVDNKRDAS. The segment at 939-1001 is disordered; the sequence is KVVDNKRDAS…HTSKRVQKKN (63 aa). Residues S948 and S950 each carry the phosphoserine modification.

This is an uncharacterized protein from Schizosaccharomyces pombe (strain 972 / ATCC 24843) (Fission yeast).